The sequence spans 393 residues: Formate-dependent phosphoribosylglycinamide formyltransferase (393 aa).

N(1)-(5-phospho-beta-D-ribosyl)glycinamide is bound by residues 22–23 (EL) and Glu-82. Residues Arg-114, Lys-155, 160–165 (SSGKGQ), 195–198 (EGFV), and Glu-203 contribute to the ATP site. An ATP-grasp domain is found at 119–308 (RLAAEELGLP…EFALHVRAFT (190 aa)). Glu-267 and Glu-279 together coordinate Mg(2+). N(1)-(5-phospho-beta-D-ribosyl)glycinamide contacts are provided by residues Asp-286, Lys-356, and 363–364 (RR).

The protein belongs to the PurK/PurT family. Homodimer.

It catalyses the reaction N(1)-(5-phospho-beta-D-ribosyl)glycinamide + formate + ATP = N(2)-formyl-N(1)-(5-phospho-beta-D-ribosyl)glycinamide + ADP + phosphate + H(+). Its pathway is purine metabolism; IMP biosynthesis via de novo pathway; N(2)-formyl-N(1)-(5-phospho-D-ribosyl)glycinamide from N(1)-(5-phospho-D-ribosyl)glycinamide (formate route): step 1/1. Involved in the de novo purine biosynthesis. Catalyzes the transfer of formate to 5-phospho-ribosyl-glycinamide (GAR), producing 5-phospho-ribosyl-N-formylglycinamide (FGAR). Formate is provided by PurU via hydrolysis of 10-formyl-tetrahydrofolate. The chain is Formate-dependent phosphoribosylglycinamide formyltransferase from Vibrio cholerae serotype O1 (strain M66-2).